We begin with the raw amino-acid sequence, 67 residues long: DNA gyrase inhibitor YacG (67 aa).

The Zn(2+) site is built by cysteine 8, cysteine 11, cysteine 27, and cysteine 31.

This sequence belongs to the DNA gyrase inhibitor YacG family. In terms of assembly, interacts with GyrB. Requires Zn(2+) as cofactor.

Inhibits all the catalytic activities of DNA gyrase by preventing its interaction with DNA. Acts by binding directly to the C-terminal domain of GyrB, which probably disrupts DNA binding by the gyrase. The chain is DNA gyrase inhibitor YacG from Ralstonia pickettii (strain 12J).